We begin with the raw amino-acid sequence, 355 residues long: MSAYCGKYKDELIKNAAYIGTPGKGILAADESTGTIGKRLSSINVENVEENRRALRELLFCCPGALQYISGVILFEETLYQKTKDGKPFVDVLKEGGVLPGIKVDKGTIEVVGTDKETTTQGHDDLGKRCAKYYEAGARFAKWRAVLKIGPNEPSQLAIDLNAQGLARYAIICQENGLVPIVEPEILVDGPHDIDRCAYVTETVLAACYKALNEHHVLLEGTLLKPNMVTPGSDSKKVTPEVIAEYTVRTLQRTVPAAVPAVLFLSGGQSEEEATRNLNAMNKLSTKKPWSLSFSFGRALQASTLKAWAGKVENLEKARAAFLARCKANSEATLGTYKGDAAADTESLHVKDYKY.

Arg52 and Lys142 together coordinate substrate. The active-site Proton acceptor is the Glu183. Lys225 (schiff-base intermediate with dihydroxyacetone-P) is an active-site residue.

Belongs to the class I fructose-bisphosphate aldolase family.

The protein resides in the cytoplasm. The enzyme catalyses beta-D-fructose 1,6-bisphosphate = D-glyceraldehyde 3-phosphate + dihydroxyacetone phosphate. It functions in the pathway carbohydrate degradation; glycolysis; D-glyceraldehyde 3-phosphate and glycerone phosphate from D-glucose: step 4/4. This chain is Fructose-bisphosphate aldolase, cytoplasmic isozyme, found in Zea mays (Maize).